Consider the following 219-residue polypeptide: Thiopurine S-methyltransferase (219 aa).

The S-adenosyl-L-methionine site is built by Trp10, Leu45, Glu66, and Arg123.

Belongs to the class I-like SAM-binding methyltransferase superfamily. TPMT family.

It localises to the cytoplasm. It catalyses the reaction S-adenosyl-L-methionine + a thiopurine = S-adenosyl-L-homocysteine + a thiopurine S-methylether.. This Shewanella frigidimarina (strain NCIMB 400) protein is Thiopurine S-methyltransferase.